The primary structure comprises 170 residues: Phosphopantetheine adenylyltransferase (170 aa).

Thr10 contacts substrate. ATP contacts are provided by residues 10–11 (TF) and His18. Residues Lys42, Val79, and Arg93 each coordinate substrate. ATP contacts are provided by residues 94 to 96 (GLR), Glu104, and 129 to 135 (TQFISST).

This sequence belongs to the bacterial CoaD family. As to quaternary structure, homohexamer. It depends on Mg(2+) as a cofactor.

The protein localises to the cytoplasm. It carries out the reaction (R)-4'-phosphopantetheine + ATP + H(+) = 3'-dephospho-CoA + diphosphate. It functions in the pathway cofactor biosynthesis; coenzyme A biosynthesis; CoA from (R)-pantothenate: step 4/5. Its function is as follows. Reversibly transfers an adenylyl group from ATP to 4'-phosphopantetheine, yielding dephospho-CoA (dPCoA) and pyrophosphate. This Parvibaculum lavamentivorans (strain DS-1 / DSM 13023 / NCIMB 13966) protein is Phosphopantetheine adenylyltransferase.